Consider the following 129-residue polypeptide: MYFLYVGIFGALGGMCRYAMNLWLGGGDFPSATLAVNLIGCFLLAFIMPFLAEKSRISLVLLNGIGTGFIGAFTTFSAFSVDTIELLQQGEVVLAISYILVSLIGGLVMVKFGRRFSNKLLRRGAHHVD.

The next 4 membrane-spanning stretches (helical) occupy residues 3-23 (FLYV…MNLW), 32-52 (ATLA…PFLA), 59-79 (LVLL…FSAF), and 90-110 (GEVV…LVMV). 2 residues coordinate Na(+): Gly71 and Thr74.

It belongs to the fluoride channel Fluc/FEX (TC 1.A.43) family.

The protein resides in the cell membrane. The catalysed reaction is fluoride(in) = fluoride(out). Na(+) is not transported, but it plays an essential structural role and its presence is essential for fluoride channel function. Its function is as follows. Fluoride-specific ion channel. Important for reducing fluoride concentration in the cell, thus reducing its toxicity. This is Fluoride-specific ion channel FluC 2 from Listeria innocua serovar 6a (strain ATCC BAA-680 / CLIP 11262).